The following is a 321-amino-acid chain: CRISPR-associated endonuclease Cas1 2 (321 aa).

Mn(2+)-binding residues include Glu-150, His-213, and Glu-228.

The protein belongs to the CRISPR-associated endonuclease Cas1 family. In terms of assembly, homodimer, forms a heterotetramer with a Cas2 homodimer. It depends on Mg(2+) as a cofactor. The cofactor is Mn(2+).

In terms of biological role, CRISPR (clustered regularly interspaced short palindromic repeat), is an adaptive immune system that provides protection against mobile genetic elements (viruses, transposable elements and conjugative plasmids). CRISPR clusters contain spacers, sequences complementary to antecedent mobile elements, and target invading nucleic acids. CRISPR clusters are transcribed and processed into CRISPR RNA (crRNA). Acts as a dsDNA endonuclease. Involved in the integration of spacer DNA into the CRISPR cassette. In Moorella thermoacetica (strain ATCC 39073 / JCM 9320), this protein is CRISPR-associated endonuclease Cas1 2.